The primary structure comprises 446 residues: Probable D-serine dehydratase (446 aa).

The residue at position 116 (Lys-116) is an N6-(pyridoxal phosphate)lysine.

Belongs to the serine/threonine dehydratase family. DsdA subfamily. The cofactor is pyridoxal 5'-phosphate.

The enzyme catalyses D-serine = pyruvate + NH4(+). The sequence is that of Probable D-serine dehydratase from Bacillus cereus (strain 03BB102).